The following is a 62-amino-acid chain: Large ribosomal subunit protein uL30 (62 aa).

This sequence belongs to the universal ribosomal protein uL30 family. As to quaternary structure, part of the 50S ribosomal subunit.

This Staphylococcus carnosus (strain TM300) protein is Large ribosomal subunit protein uL30.